A 1404-amino-acid chain; its full sequence is Proteoglycan 4 (1404 aa).

An N-terminal signal peptide occupies residues methionine 1–serine 24. 2 SMB domains span residues aspartate 26 to serine 69 and alanine 66 to histidine 108. 14 cysteine pairs are disulfide-bonded: cysteine 30–cysteine 34, cysteine 30–cysteine 46, cysteine 34–cysteine 64, cysteine 44–cysteine 46, cysteine 44–cysteine 57, cysteine 50–cysteine 56, cysteine 57–cysteine 64, cysteine 70–cysteine 74, cysteine 70–cysteine 86, cysteine 74–cysteine 104, cysteine 84–cysteine 86, cysteine 84–cysteine 97, cysteine 90–cysteine 96, and cysteine 97–cysteine 104. Positions threonine 111 to glutamine 966 are disordered. Residues serine 123 and serine 136 are each glycosylated (O-linked (GalNAc...) serine). Residues threonine 132–lysine 146 are compositionally biased toward basic residues. Positions serine 166 to serine 177 are enriched in low complexity. The span at glutamate 193–lysine 205 shows a compositional bias: basic and acidic residues. Asparagine 206 carries N-linked (GlcNAc...) asparagine glycosylation. Positions threonine 235 to isoleucine 252 are enriched in polar residues. O-linked (GalNAc...) threonine glycans are attached at residues threonine 240 and threonine 253. Residues proline 266–leucine 276 are compositionally biased toward polar residues. O-linked (GalNAc...) threonine glycans are attached at residues threonine 277, threonine 291, and threonine 305. An O-linked (GalNAc...) serine glycan is attached at serine 306. Threonine 310 carries O-linked (GalNAc...) threonine glycosylation. Serine 317 is a glycosylation site (O-linked (GalNAc...) serine). Residues threonine 324, threonine 332, and threonine 338 are each glycosylated (O-linked (GalNAc...) threonine). Composition is skewed to low complexity over residues alanine 329–lysine 348 and lysine 356–alanine 405. The stretch at lysine 348–proline 355 is repeat 1. The 59 X 8 AA repeats of K-X-P-X-P-T-T-X stretch occupies residues lysine 348–serine 855. The stretch at lysine 356–proline 363 is one 2; approximate repeat. Repeat unit 3 spans residues lysine 364 to isoleucine 371. Threonine 367 is a glycosylation site (O-linked (GalNAc...) threonine). Residues lysine 372 to proline 378 form a 4; approximate repeat. A glycan (O-linked (GalNAc...) serine) is linked at serine 373. Threonine 376, threonine 384, and threonine 385 each carry an O-linked (GalNAc...) threonine glycan. Residues lysine 379–threonine 386 form repeat 5. A 6; approximate repeat occupies lysine 387–proline 393. Serine 388 is a glycosylation site (O-linked (GalNAc...) serine). O-linked (GalNAc...) threonine glycans are attached at residues threonine 391, threonine 399, threonine 400, threonine 407, threonine 408, threonine 415, and threonine 423. Repeat copies occupy residues lysine 394–threonine 401, lysine 402–proline 409, lysine 410–threonine 417, and lysine 418–threonine 425. Residues alanine 413 to threonine 431 are compositionally biased toward low complexity. The stretch at lysine 426 to proline 432 is one 11; approximate repeat. Serine 427 is a glycosylation site (O-linked (GalNAc...) serine). O-linked (GalNAc...) threonine glycosylation is found at threonine 430, threonine 438, threonine 439, threonine 446, threonine 447, threonine 454, and threonine 455. Composition is skewed to pro residues over residues proline 432–proline 467 and proline 476–proline 506. 4 consecutive repeat copies span residues lysine 433 to proline 440, lysine 441 to proline 448, lysine 449 to proline 456, and lysine 457 to proline 464. One copy of the 16; approximate repeat lies at lysine 465–threonine 471. The stretch at lysine 472–proline 479 is repeat 17. Residues threonine 477, threonine 478, threonine 485, threonine 493, threonine 494, threonine 501, threonine 502, and threonine 509 are each glycosylated (O-linked (GalNAc...) threonine). The 18; approximate repeat unit spans residues lysine 480–proline 487. The 19; approximate repeat unit spans residues lysine 488–proline 495. Tandem repeats lie at residues lysine 496 to proline 503, lysine 504 to threonine 511, lysine 512 to proline 519, and lysine 520 to threonine 527. A compositionally biased stretch (low complexity) spans alanine 523–alanine 561. O-linked (GalNAc...) threonine glycosylation occurs at threonine 525. One copy of the 24; approximate repeat lies at lysine 528–threonine 534. Serine 529 carries an O-linked (GalNAc...) serine glycan. Threonine 532, threonine 540, and threonine 541 each carry an O-linked (GalNAc...) threonine glycan. Residues lysine 535–threonine 542 form repeat 25. The 26; approximate repeat unit spans residues lysine 543 to proline 549. Tandem repeats lie at residues lysine 550–threonine 557, lysine 558–proline 565, lysine 566–proline 573, lysine 574–proline 581, lysine 582–proline 589, and lysine 590–threonine 597. An O-linked (GalNAc...) serine glycan is attached at serine 553. Residues threonine 555, threonine 563, threonine 564, threonine 571, threonine 572, threonine 579, threonine 580, threonine 587, threonine 588, threonine 595, threonine 603, threonine 604, threonine 611, threonine 612, threonine 616, threonine 619, and threonine 627 are each glycosylated (O-linked (GalNAc...) threonine). Residues proline 562–proline 592 are compositionally biased toward pro residues. Residues lysine 598–proline 605 form a 33; approximate repeat. The segment covering proline 602 to threonine 611 has biased composition (pro residues). Repeat 34 spans residues lysine 606–proline 613. The span at threonine 612–threonine 636 shows a compositional bias: low complexity. One copy of the 35; approximate repeat lies at lysine 614–proline 621. One copy of the 36; approximate repeat lies at lysine 622–proline 629. Residues glutamate 638–proline 645 form a 37; approximate repeat. Residues proline 653–threonine 667 are compositionally biased toward pro residues. The 38; approximate repeat unit spans residues glutamate 662–proline 669. O-linked (GalNAc...) threonine glycans are attached at residues threonine 676, threonine 683, threonine 684, threonine 691, threonine 692, threonine 699, threonine 700, threonine 704, and threonine 707. Over residues proline 677–threonine 699 the composition is skewed to pro residues. 3 consecutive repeat copies span residues lysine 678–proline 685, lysine 686–proline 693, and lysine 694–proline 701. Positions threonine 700–alanine 721 are enriched in low complexity. A 42; approximate repeat occupies lysine 702–proline 709. Residues lysine 710–leucine 717 form a 43; approximate repeat. Residues lysine 718–proline 725 form repeat 44. Threonine 723, threonine 724, and threonine 736 each carry an O-linked (GalNAc...) threonine glycan. A compositionally biased stretch (low complexity) spans proline 728–threonine 761. The stretch at lysine 731–threonine 738 is one 45; approximate repeat. The stretch at lysine 739 to serine 746 is one 46; approximate repeat. One copy of the 47; approximate repeat lies at aspartate 747–proline 754. A 48; approximate repeat occupies lysine 755–proline 762. The span at proline 762–threonine 776 shows a compositional bias: pro residues. 2 consecutive repeat copies span residues lysine 763–proline 770 and lysine 771–proline 778. O-linked (GalNAc...) threonine glycosylation is found at threonine 768, threonine 769, threonine 776, and threonine 777. Over residues threonine 777 to alanine 790 the composition is skewed to low complexity. A 51; approximate repeat occupies lysine 779–leucine 786. Repeat 52 spans residues lysine 787–proline 794. O-linked (GalNAc...) threonine glycosylation is found at threonine 792, threonine 793, and threonine 805. Over residues proline 797–threonine 830 the composition is skewed to low complexity. The 53; approximate repeat unit spans residues lysine 800–threonine 807. The 54; approximate repeat unit spans residues lysine 808–serine 815. Serine 812 carries an O-linked (GalNAc...) serine glycan. The stretch at aspartate 816–proline 823 is one 55; approximate repeat. One copy of the 56; approximate repeat lies at lysine 824–proline 831. Threonine 829, threonine 837, and threonine 838 each carry an O-linked (GalNAc...) threonine glycan. Over residues proline 831 to threonine 853 the composition is skewed to pro residues. Tandem repeats lie at residues lysine 832–proline 839 and lysine 840–proline 847. A 59; approximate repeat occupies glutamate 848–serine 855. Residues threonine 854 to proline 866 are compositionally biased toward low complexity. O-linked (GalNAc...) serine glycosylation occurs at serine 892. Low complexity predominate over residues proline 899–threonine 914. Threonine 900 is a glycosylation site (O-linked (GalNAc...) threonine). A compositionally biased stretch (basic and acidic residues) spans alanine 915–threonine 926. Low complexity predominate over residues threonine 927 to glutamine 966. 2 O-linked (GalNAc...) threonine glycosylation sites follow: threonine 930 and threonine 931. O-linked (GalNAc...) serine glycosylation is present at serine 962. O-linked (GalNAc...) threonine glycosylation is found at threonine 963, threonine 968, threonine 975, threonine 978, threonine 979, and threonine 980. Residues isoleucine 992–threonine 1104 are disordered. Positions asparagine 999 to threonine 1012 are enriched in basic and acidic residues. Basic residues predominate over residues lysine 1026 to lysine 1047. A glycan (O-linked (GalNAc...) threonine) is linked at threonine 1039. The segment covering threonine 1048 to proline 1060 has biased composition (low complexity). Residues leucine 1073 to serine 1085 are compositionally biased toward polar residues. A disulfide bridge connects residues cysteine 1146 and cysteine 1403. Hemopexin repeat units lie at residues glycine 1148–isoleucine 1191 and proline 1192–leucine 1239. An N-linked (GlcNAc...) asparagine glycan is attached at asparagine 1159. O-linked (GalNAc...) threonine glycosylation is present at threonine 1161.

In terms of assembly, homodimer; disulfide-linked. In terms of processing, N-glycosylated. O-glycosylated; contains glycosaminoglycan chondroitin sulfate and keratan sulfate. O-glycosylated with sialylated oligosaccharides which are predominantly represented by the monosialylated core type I structure, NeuNAcalpha2-3Galbeta1-3GalNAc, with smaller amounts of disialylated O-glycans. Post-translationally, the disulfide bond between Cys-1146 and Cys-1403 is essential for protein cleavage. In terms of processing, proteolytically cleaved by cathepsin CTSG. In terms of tissue distribution, highly expressed in synovial tissue, cartilage and liver and weakly in heart and lung. Isoform B is expressed in kidney, lung, liver, heart and brain. Isoform C and isoform D are widely expressed.

Its subcellular location is the secreted. Functionally, plays a role in boundary lubrication within articulating joints. Prevents protein deposition onto cartilage from synovial fluid by controlling adhesion-dependent synovial growth and inhibiting the adhesion of synovial cells to the cartilage surface. Its function is as follows. Isoform F plays a role as a growth factor acting on the primitive cells of both hematopoietic and endothelial cell lineages. The sequence is that of Proteoglycan 4 (PRG4) from Homo sapiens (Human).